Reading from the N-terminus, the 204-residue chain is 3-isopropylmalate dehydratase small subunit (204 aa).

The protein belongs to the LeuD family. LeuD type 1 subfamily. Heterodimer of LeuC and LeuD.

The enzyme catalyses (2R,3S)-3-isopropylmalate = (2S)-2-isopropylmalate. The protein operates within amino-acid biosynthesis; L-leucine biosynthesis; L-leucine from 3-methyl-2-oxobutanoate: step 2/4. Catalyzes the isomerization between 2-isopropylmalate and 3-isopropylmalate, via the formation of 2-isopropylmaleate. This chain is 3-isopropylmalate dehydratase small subunit, found in Roseiflexus castenholzii (strain DSM 13941 / HLO8).